Here is a 399-residue protein sequence, read N- to C-terminus: Probable aspartate/prephenate aminotransferase (399 aa).

The L-aspartate site is built by Gly-39, Trp-125, and Asn-175. Lys-239 is modified (N6-(pyridoxal phosphate)lysine). Arg-375 contacts L-aspartate.

Belongs to the class-I pyridoxal-phosphate-dependent aminotransferase family. As to quaternary structure, homodimer. Pyridoxal 5'-phosphate serves as cofactor.

It is found in the cytoplasm. The catalysed reaction is L-aspartate + 2-oxoglutarate = oxaloacetate + L-glutamate. The enzyme catalyses L-arogenate + 2-oxoglutarate = prephenate + L-glutamate. In terms of biological role, catalyzes the reversible conversion of aspartate and 2-oxoglutarate to glutamate and oxaloacetate. Can also transaminate prephenate in the presence of glutamate. The chain is Probable aspartate/prephenate aminotransferase (aatA) from Rickettsia bellii (strain RML369-C).